The primary structure comprises 137 residues: Large ribosomal subunit protein uL16c (137 aa).

The protein belongs to the universal ribosomal protein uL16 family. In terms of assembly, part of the 50S ribosomal subunit.

It is found in the plastid. The protein localises to the chloroplast. This Bigelowiella natans (Pedinomonas minutissima) protein is Large ribosomal subunit protein uL16c.